Here is a 66-residue protein sequence, read N- to C-terminus: Phylloseptin-H7 (66 aa).

An N-terminal signal peptide occupies residues 1-22 (MAFLKKSLFLVLFLGLVSLSIC). The propeptide occupies 23–44 (EEEKRETEEEENDQEEDDKSEE). The interval 25–44 (EKRETEEEENDQEEDDKSEE) is disordered. The span at 30 to 41 (EEEENDQEEDDK) shows a compositional bias: acidic residues. Leucine 65 carries the post-translational modification Leucine amide.

In terms of tissue distribution, expressed by the skin glands.

It localises to the secreted. In terms of biological role, has antimicrobial activity. This is Phylloseptin-H7 from Pithecopus hypochondrialis (Orange-legged leaf frog).